The following is a 720-amino-acid chain: NADH-ubiquinone oxidoreductase 78 kDa subunit, mitochondrial (720 aa).

The N-terminal 23 residues, 1-23 (MNSIKSHILRSSKRYISASSKRL), are a transit peptide targeting the mitochondrion. One can recognise a 2Fe-2S ferredoxin-type domain in the interval 24–102 (AEVEVTVDGR…GMVVHTDSER (79 aa)). [2Fe-2S] cluster-binding residues include Cys-58, Cys-69, Cys-72, and Cys-86. One can recognise a 4Fe-4S His(Cys)3-ligated-type domain in the interval 102-141 (RIKKAREGVTEMLLENHPLDCPVCDQGGECDLQEQSQRYG). The 4Fe-4S Mo/W bis-MGD-type domain occupies 241–297 (LKRTETIDVLDAVGSNIRVDTRGIEVMRVLPRLNDDVNEEWISDKTRFACDGLKTQR).

It belongs to the complex I 75 kDa subunit family. As to quaternary structure, core subunit of respiratory chain NADH dehydrogenase (Complex I) which is composed of 45 different subunits. This is the largest subunit of complex I and it is a component of the iron-sulfur (IP) fragment of the enzyme. Requires [2Fe-2S] cluster as cofactor. [4Fe-4S] cluster is required as a cofactor.

The protein localises to the mitochondrion. It carries out the reaction a ubiquinone + NADH + 5 H(+)(in) = a ubiquinol + NAD(+) + 4 H(+)(out). Core subunit of the mitochondrial membrane respiratory chain NADH dehydrogenase (Complex I) which catalyzes electron transfer from NADH through the respiratory chain, using ubiquinone as an electron acceptor. Essential for catalysing the entry and efficient transfer of electrons within complex I. Plays a key role in the assembly and stability of complex I and participates in the association of complex I with ubiquinol-cytochrome reductase complex (Complex III) to form supercomplexes. Plays a role in cell wall integrity and is involved in osmotic and oxidative resistance, yeast to hypha transition, and the ability to damage and invade oral epithelial cells. The protein is NADH-ubiquinone oxidoreductase 78 kDa subunit, mitochondrial of Candida albicans (strain SC5314 / ATCC MYA-2876) (Yeast).